The following is a 155-amino-acid chain: Crossover junction endodeoxyribonuclease RuvC (155 aa).

Catalysis depends on residues D7, E68, and D140. Mg(2+) is bound by residues D7, E68, and D140.

The protein belongs to the RuvC family. As to quaternary structure, homodimer which binds Holliday junction (HJ) DNA. The HJ becomes 2-fold symmetrical on binding to RuvC with unstacked arms; it has a different conformation from HJ DNA in complex with RuvA. In the full resolvosome a probable DNA-RuvA(4)-RuvB(12)-RuvC(2) complex forms which resolves the HJ. Requires Mg(2+) as cofactor.

The protein resides in the cytoplasm. The catalysed reaction is Endonucleolytic cleavage at a junction such as a reciprocal single-stranded crossover between two homologous DNA duplexes (Holliday junction).. Its function is as follows. The RuvA-RuvB-RuvC complex processes Holliday junction (HJ) DNA during genetic recombination and DNA repair. Endonuclease that resolves HJ intermediates. Cleaves cruciform DNA by making single-stranded nicks across the HJ at symmetrical positions within the homologous arms, yielding a 5'-phosphate and a 3'-hydroxyl group; requires a central core of homology in the junction. The consensus cleavage sequence is 5'-(A/T)TT(C/G)-3'. Cleavage occurs on the 3'-side of the TT dinucleotide at the point of strand exchange. HJ branch migration catalyzed by RuvA-RuvB allows RuvC to scan DNA until it finds its consensus sequence, where it cleaves and resolves the cruciform DNA. In Prochlorococcus marinus (strain SARG / CCMP1375 / SS120), this protein is Crossover junction endodeoxyribonuclease RuvC.